Here is a 609-residue protein sequence, read N- to C-terminus: Zinc metalloproteinase-disintegrin-like VMP-III (609 aa).

The first 20 residues, Met1–Ser20, serve as a signal peptide directing secretion. A propeptide spanning residues Ile21–Ala189 is cleaved from the precursor. One can recognise a Peptidase M12B domain in the interval Arg198–Pro393. Ca(2+) contacts are provided by Glu201 and Asp285. 3 cysteine pairs are disulfide-bonded: Cys308–Cys388, Cys348–Cys372, and Cys350–Cys355. His333 is a Zn(2+) binding site. Glu334 is a catalytic residue. 2 residues coordinate Zn(2+): His337 and His343. The N-linked (GlcNAc...) asparagine glycan is linked to Asn371. Cys388, Asn391, Val403, Asn406, Leu408, Glu410, Glu413, and Asp416 together coordinate Ca(2+). The 87-residue stretch at Pro401–Asn487 folds into the Disintegrin domain. Intrachain disulfides connect Cys404–Cys433, Cys415–Cys428, Cys417–Cys423, Cys427–Cys450, Cys441–Cys447, Cys446–Cys472, Cys459–Cys479, Cys466–Cys498, Cys491–Cys503, Cys510–Cys560, Cys525–Cys571, Cys538–Cys548, Cys555–Cys597, and Cys591–Cys602. Positions Glu465 to Asp467 match the D/ECD-tripeptide motif. Asp467, Pro468, Glu470, Asp482, and Val483 together coordinate Ca(2+).

Belongs to the venom metalloproteinase (M12B) family. P-III subfamily. P-IIIa sub-subfamily. As to quaternary structure, monomer. The cofactor is Zn(2+). Expressed by the venom gland.

The protein resides in the secreted. In terms of biological role, snake venom metalloproteinase that impairs hemostasis in the envenomed animal. The sequence is that of Zinc metalloproteinase-disintegrin-like VMP-III from Crotalus viridis viridis (Prairie rattlesnake).